A 338-amino-acid chain; its full sequence is MSFIDEVKIHVKSGDGGAGCVSFRREKFIPLGGPDGGDGGKGGNVIVEASPNLSTLLDLRQHPHQKAGRGRNGMGKDRHGAYGADLKMLLPVGTVIKDAETDEVLVDLNEPGMSVVLLKGGRGGQGNARFASSTNKAPKFAQPGEPGEERWLRLELKLMADVGLLGMPSVGKSSLISKISAARPKIADYHFTTLKPNLGVVAYKNYKSFVMADIPGLIEGAHEGAGLGHRFLKHLERTGQLIHILDISWMPDRDPLREYEAINRELALFNPELAEKKQIIVINKIDLPVVKENLATVLPYFEERGLKVFPISAATGEGIPALLDEIARNLWGQAEEEW.

The Obg domain occupies 1–159; that stretch reads MSFIDEVKIH…RWLRLELKLM (159 aa). The OBG-type G domain maps to 160–331; that stretch reads ADVGLLGMPS…LLDEIARNLW (172 aa). Residues 166–173, 191–195, 213–216, 283–286, and 312–314 each bind GTP; these read GMPSVGKS, FTTLK, DIPG, NKID, and SAA. Mg(2+)-binding residues include Ser-173 and Thr-193.

Belongs to the TRAFAC class OBG-HflX-like GTPase superfamily. OBG GTPase family. Monomer. Requires Mg(2+) as cofactor.

It localises to the cytoplasm. Functionally, an essential GTPase which binds GTP, GDP and possibly (p)ppGpp with moderate affinity, with high nucleotide exchange rates and a fairly low GTP hydrolysis rate. Plays a role in control of the cell cycle, stress response, ribosome biogenesis and in those bacteria that undergo differentiation, in morphogenesis control. This is GTPase Obg from Geotalea uraniireducens (strain Rf4) (Geobacter uraniireducens).